The chain runs to 621 residues: Replication factor A protein 1 (621 aa).

At S2 the chain carries N-acetylserine. Phosphoserine; by ATM or ATR is present on S178. Residues 197–284 (WTIKARVSYK…PYELNLDRDT (88 aa)) constitute a DNA-binding region (OB). The segment at 486–508 (CSNENCNKKVLEQPDGTWRCEKC) adopts a C4-type zinc-finger fold.

It belongs to the replication factor A protein 1 family. In terms of assembly, component of the heterotrimeric canonical replication protein A complex (RPA). Interacts with POB3. The N-terminus is blocked.

The protein resides in the nucleus. As part of the replication protein A (RPA/RP-A), a single-stranded DNA-binding heterotrimeric complex, may play an essential role in DNA replication, recombination and repair. Binds and stabilizes single-stranded DNA intermediates, preventing complementary DNA reannealing and recruiting different proteins involved in DNA metabolism. Binds to single-stranded sequences participating in DNA replication in addition to those mediating transcriptional repression (URS1) and activation (CAR1). Stimulates the activity of a cognate strand exchange protein (SEP1). It cooperates with T-AG and DNA topoisomerase I to unwind template DNA containing the simian virus 40 origin of DNA replication. In Saccharomyces cerevisiae (strain ATCC 204508 / S288c) (Baker's yeast), this protein is Replication factor A protein 1 (RFA1).